A 272-amino-acid polypeptide reads, in one-letter code: Acetyl-coenzyme A carboxylase carboxyl transferase subunit alpha (272 aa).

Residues 1–248 form the CoA carboxyltransferase C-terminal domain; it reads MDKDFMKINV…KKTIVDSLLE (248 aa).

The protein belongs to the AccA family. As to quaternary structure, acetyl-CoA carboxylase is a heterohexamer composed of biotin carboxyl carrier protein (AccB), biotin carboxylase (AccC) and two subunits each of ACCase subunit alpha (AccA) and ACCase subunit beta (AccD).

The protein localises to the cytoplasm. It catalyses the reaction N(6)-carboxybiotinyl-L-lysyl-[protein] + acetyl-CoA = N(6)-biotinyl-L-lysyl-[protein] + malonyl-CoA. The protein operates within lipid metabolism; malonyl-CoA biosynthesis; malonyl-CoA from acetyl-CoA: step 1/1. In terms of biological role, component of the acetyl coenzyme A carboxylase (ACC) complex. First, biotin carboxylase catalyzes the carboxylation of biotin on its carrier protein (BCCP) and then the CO(2) group is transferred by the carboxyltransferase to acetyl-CoA to form malonyl-CoA. This is Acetyl-coenzyme A carboxylase carboxyl transferase subunit alpha from Clostridium beijerinckii (strain ATCC 51743 / NCIMB 8052) (Clostridium acetobutylicum).